Reading from the N-terminus, the 626-residue chain is Janus kinase and microtubule-interacting protein 1 (626 aa).

The tract at residues 1–22 (MSKKGRSKGEKPEMETDAVQMA) is disordered. Positions 1-365 (MSKKGRSKGE…KIKNLTRENV (365 aa)) are mediates association with microtubules. 2 coiled-coil regions span residues 19–255 (VQMA…EAER) and 284–413 (ERDV…DDLS). Positions 365-626 (VEMKEKLSAQ…ILFEPKLKFM (262 aa)) are mediates interaction with TYK2 and GABBR1. Position 382 is a phosphoserine (serine 382). Polar residues predominate over residues 452-461 (ETLSETSYNT). Positions 452–477 (ETLSETSYNTDRTDRTPATPEEDLDD) are disordered. Threonine 470 bears the Phosphothreonine mark. Positions 490 to 604 (QLTREYQALQ…EFRVLELEVR (115 aa)) form a coiled coil.

Belongs to the JAKMIP family. Homodimer. Forms a complex with GABBR1 and KIF5B/kinesin-1. Interacts with JAK1 and TYK2. As to expression, predominantly expressed in neural tissues and lymphoid cells (at protein level). Isoform 2, isoform 3 and isoform 4 are specifically expressed in brain and retina. Isoform 1 and isoform 5 are also detected in liver, lung and skeletal muscle. Also detected in testis and to a lower extent spleen and intestine.

The protein resides in the cytoplasm. It localises to the cytoskeleton. It is found in the membrane. Functionally, associates with microtubules and may play a role in the microtubule-dependent transport of the GABA-B receptor. May play a role in JAK1 signaling and regulate microtubule cytoskeleton rearrangements. The sequence is that of Janus kinase and microtubule-interacting protein 1 (JAKMIP1) from Homo sapiens (Human).